Consider the following 126-residue polypeptide: Adrenocorticotropic hormone receptor (126 aa).

The chain crosses the membrane as a helical span at residues 1 to 25; the sequence is VLPEEIFFTISIVGVLENLIVLLAV. Topologically, residues 26–34 are cytoplasmic; sequence FKNKNLQAP. Residues 35–55 traverse the membrane as a helical segment; sequence MYFFICSLAISDMLGSLYKIL. The Extracellular portion of the chain corresponds to 56-80; the sequence is ENILIILRNMGYLKPRGSFETTADD. A helical membrane pass occupies residues 81–102; sequence IIDSLFVLSLLGAIFSLSVIAA. At 103–123 the chain is on the cytoplasmic side; it reads DRYITIFHALRYHSIVTMRRT. A helical transmembrane segment spans residues 124–126; that stretch reads VVV.

Belongs to the G-protein coupled receptor 1 family. As to quaternary structure, interacts with MRAP; increasing ligand-sensitivity and generation of cAMP. Interacts with MRAP2; competing with MRAP for binding to MC2R and impairing the binding of corticotropin (ACTH).

It is found in the cell membrane. Its function is as follows. Receptor for corticotropin (ACTH). This receptor is mediated by G proteins (G(s)) which activate adenylate cyclase (cAMP). In Papio hamadryas (Hamadryas baboon), this protein is Adrenocorticotropic hormone receptor (MC2R).